The chain runs to 151 residues: UPF0178 protein YaiI (151 aa).

The protein belongs to the UPF0178 family.

This is UPF0178 protein YaiI from Salmonella enteritidis PT4 (strain P125109).